The primary structure comprises 803 residues: Myb-like protein V (803 aa).

Disordered regions lie at residues 237 to 333 (SNIY…LPGL) and 429 to 803 (KSTS…SRRK). Residues 258 to 323 (DANDKNENNN…ENNKNKRTKS (66 aa)) are a coiled coil. The span at 271 to 294 (DDADDAAADDADDADDDDMDDESD) shows a compositional bias: acidic residues. Positions 295–315 (SNNNNKNSNNKNSNNKNSNEN) are enriched in low complexity. Residues 332–379 (GLWTDEECRSLIKAVMIIGHRWIKIKEDYYSTSKRKPSQLKDKMRSLR) enclose the Myb-like domain. 2 coiled-coil regions span residues 400 to 429 (EIEK…SNIK) and 463 to 496 (NNED…NSAV). The span at 429-438 (KSTSNTSAAS) shows a compositional bias: polar residues. 2 stretches are compositionally biased toward acidic residues: residues 448–480 (NDSD…DEND) and 510–533 (EEEE…EENE). Basic residues-rich tracts occupy residues 537–553 (KQKR…KKLK) and 568–577 (HKSKLKSKPQ). The stretch at 573–616 (KSKPQRKVEKEESEKEESEEEESEEEEEEDDEDYESEEDKKKKK) forms a coiled coil. The span at 586–609 (EKEESEEEESEEEEEEDDEDYESE) shows a compositional bias: acidic residues. 2 stretches are compositionally biased toward low complexity: residues 625–636 (TSTHTTTTTTTT) and 666–733 (KKSN…PTKK). Over residues 786–795 (LNKDSKENKK) the composition is skewed to basic and acidic residues.

This is Myb-like protein V (mybV) from Dictyostelium discoideum (Social amoeba).